Reading from the N-terminus, the 223-residue chain is Ribose-5-phosphate isomerase A (223 aa).

Substrate is bound by residues 28-31, 81-84, and 94-97; these read TGTT, DSAD, and KGGG. Glu103 acts as the Proton acceptor in catalysis. Lys121 contacts substrate.

The protein belongs to the ribose 5-phosphate isomerase family. In terms of assembly, homodimer.

The catalysed reaction is aldehydo-D-ribose 5-phosphate = D-ribulose 5-phosphate. The protein operates within carbohydrate degradation; pentose phosphate pathway; D-ribose 5-phosphate from D-ribulose 5-phosphate (non-oxidative stage): step 1/1. Catalyzes the reversible conversion of ribose-5-phosphate to ribulose 5-phosphate. The protein is Ribose-5-phosphate isomerase A of Buchnera aphidicola subsp. Acyrthosiphon pisum (strain 5A).